The chain runs to 509 residues: 4-aminobutyrate aminotransferase (509 aa).

166–167 (GS) provides a ligand contact to pyridoxal 5'-phosphate. Arg223 serves as a coordination point for substrate. At Lys363 the chain carries N6-(pyridoxal phosphate)lysine. Position 387 (Thr387) interacts with pyridoxal 5'-phosphate.

The protein belongs to the class-III pyridoxal-phosphate-dependent aminotransferase family. In terms of assembly, homodimer. It depends on pyridoxal 5'-phosphate as a cofactor.

It is found in the cytoplasm. It carries out the reaction 4-aminobutanoate + 2-oxoglutarate = succinate semialdehyde + L-glutamate. Deaminates gamma-aminobutyric acid (GABA) to succinate-semialdehyde, which in turn is converted to succinate by the succinate semialdehyde dehydrogenase. Not required for the utilization of GABA as nitrogen source. This is 4-aminobutyrate aminotransferase (GATA) from Mycosarcoma maydis (Corn smut fungus).